The chain runs to 685 residues: Translation initiation factor IF-2 (685 aa).

The tract at residues 60–79 is disordered; the sequence is ISLAKTREPSKEKTEAKKPP. Basic and acidic residues predominate over residues 64 to 79; sequence KTREPSKEKTEAKKPP. In terms of domain architecture, tr-type G spans 175-352; sequence NRPPVVTVMG…DIRCIPDSPV (178 aa). Residues 184-191 are G1; it reads GHVDHGKT. Residue 184-191 participates in GTP binding; the sequence is GHVDHGKT. A G2 region spans residues 209-213; that stretch reads GITQS. Positions 230–233 are G3; it reads DTPG. Residues 230–234 and 284–287 each bind GTP; these read DTPGH and NKID. The segment at 284–287 is G4; that stretch reads NKID. The interval 321-323 is G5; that stretch reads SAR.

Belongs to the TRAFAC class translation factor GTPase superfamily. Classic translation factor GTPase family. IF-2 subfamily.

Its subcellular location is the cytoplasm. In terms of biological role, one of the essential components for the initiation of protein synthesis. Protects formylmethionyl-tRNA from spontaneous hydrolysis and promotes its binding to the 30S ribosomal subunits. Also involved in the hydrolysis of GTP during the formation of the 70S ribosomal complex. In Fervidobacterium nodosum (strain ATCC 35602 / DSM 5306 / Rt17-B1), this protein is Translation initiation factor IF-2.